We begin with the raw amino-acid sequence, 242 residues long: Probable transcriptional regulatory protein PG_0097 (242 aa).

This sequence belongs to the TACO1 family.

Its subcellular location is the cytoplasm. The protein is Probable transcriptional regulatory protein PG_0097 of Porphyromonas gingivalis (strain ATCC BAA-308 / W83).